The following is a 295-amino-acid chain: Protein NEOXANTHIN-DEFICIENT 1 (295 aa).

Residues 221–251 (PAKVSGPSESDADKENSSEDQSSNVESVSRV) are disordered.

Functionally, required for neoxanthin biosynthesis. Probably not involved directly in the enzymatic conversion of violaxanthin to neoxanthin. Is necessary but not sufficient for neoxanthin synthesis. Seems not required for abscisic acid (ABA) biosynthesis in response to drought stress. The polypeptide is Protein NEOXANTHIN-DEFICIENT 1 (Solanum lycopersicum (Tomato)).